The primary structure comprises 98 residues: La1-like protein 13 (98 aa).

The first 24 residues, 1 to 24 (MERILKPVFLAILIVLSFSSQCMG), serve as a signal peptide directing secretion. Lysine amide is present on K97.

It belongs to the scorpion La1-like peptide family. In terms of processing, contains 4 disulfide bonds. In terms of tissue distribution, expressed by the venom gland.

The protein localises to the secreted. The polypeptide is La1-like protein 13 (Urodacus yaschenkoi (Inland robust scorpion)).